A 296-amino-acid polypeptide reads, in one-letter code: Uridine phosphorylase A (296 aa).

Residues Gly46, Arg77, and 121-124 (RLGT) contribute to the phosphate site. Residues 125–126 (SG) and 201–203 (QGR) contribute to the uridine site.

The protein belongs to the PNP/UDP phosphorylase family. Homodimer.

The enzyme catalyses uridine + phosphate = alpha-D-ribose 1-phosphate + uracil. It functions in the pathway pyrimidine metabolism; UMP biosynthesis via salvage pathway; uracil from uridine (phosphorylase route): step 1/1. Functionally, catalyzes the reversible phosphorylytic cleavage of uridine and deoxyuridine to uracil and ribose- or deoxyribose-1-phosphate. The produced molecules are then utilized as carbon and energy sources or in the rescue of pyrimidine bases for nucleotide synthesis. This chain is Uridine phosphorylase A, found in Schistosoma mansoni (Blood fluke).